The chain runs to 557 residues: Anthrax toxin receptor-like (557 aa).

The signal sequence occupies residues 1–25 (MRSHGRWGPCFLLFLLLLPPPLFRA). The Extracellular portion of the chain corresponds to 26 to 345 (GSLRYHGPGW…KSNVSVTSST (320 aa)). Positions 74–244 (DLYFILDKSG…KAMRDTVDAL (171 aa)) constitute a VWFA domain. Ser-82, Ser-84, and Thr-148 together coordinate a divalent metal cation. The helical transmembrane segment at 346 to 366 (CGIFSNWLYFLLPLLLLPLLL) threads the bilayer. Topologically, residues 367–557 (CCLWRLCRKK…PTSKAPNTQD (191 aa)) are cytoplasmic. Disordered stretches follow at residues 380-411 (EPPP…LPPP) and 497-557 (ESPS…NTQD). The span at 386–395 (KPEKEPEQEK) shows a compositional bias: basic and acidic residues. Pro residues predominate over residues 396–411 (PPPPPPPSPPPPLPPP). A compositionally biased stretch (polar residues) spans 534 to 557 (GTLQNPLCPSLPRSPTSKAPNTQD).

Belongs to the ATR family.

It localises to the membrane. The polypeptide is Anthrax toxin receptor-like (ANTXRL) (Macaca fascicularis (Crab-eating macaque)).